Here is a 972-residue protein sequence, read N- to C-terminus: Serine/threonine-protein kinase ATG1 (972 aa).

The Protein kinase domain maps to 18 to 319 (YVVEKEIGRG…FTEFFSNGLV (302 aa)). Residues 24-32 (IGRGSFAVV) and K48 each bind ATP. D166 functions as the Proton acceptor in the catalytic mechanism. Disordered regions lie at residues 359–394 (KRAS…QSDQ), 424–444 (YNNQ…SNGR), 467–506 (ALQS…HRTT), 562–605 (ASQA…SRRP), and 743–764 (DDEE…NSSG). Residues 424–436 (YNNQEERSNEERQ) are compositionally biased toward basic and acidic residues. Positions 562-584 (ASQALQMARHSSTSVSAANTAKQ) are enriched in polar residues. Over residues 585–605 (TLLRRNSRTLSSSGASTSRRP) the composition is skewed to low complexity. Residues 750-759 (EHSPGAETYR) are compositionally biased toward basic and acidic residues.

It belongs to the protein kinase superfamily. Ser/Thr protein kinase family. APG1/unc-51/ULK1 subfamily. Homodimer. Forms a ternary complex with ATG13 and ATG17.

Its subcellular location is the cytoplasm. The protein localises to the preautophagosomal structure membrane. It catalyses the reaction L-seryl-[protein] + ATP = O-phospho-L-seryl-[protein] + ADP + H(+). The enzyme catalyses L-threonyl-[protein] + ATP = O-phospho-L-threonyl-[protein] + ADP + H(+). Functionally, serine/threonine protein kinase involved in the cytoplasm to vacuole transport (Cvt) and found to be essential in autophagy, where it is required for the formation of autophagosomes. Involved in the clearance of protein aggregates which cannot be efficiently cleared by the proteasome. Required for selective autophagic degradation of the nucleus (nucleophagy) as well as for mitophagy which contributes to regulate mitochondrial quantity and quality by eliminating the mitochondria to a basal level to fulfill cellular energy requirements and preventing excess ROS production. Also involved in endoplasmic reticulum-specific autophagic process, in selective removal of ER-associated degradation (ERAD) substrates. Plays a key role in ATG9 and ATG23 cycling through the pre-autophagosomal structure and is necessary to promote ATG18 binding to ATG9 through phosphorylation of ATG9. Catalyzes phosphorylation of ATG4, decreasing the interaction between ATG4 and ATG8 and impairing deconjugation of PE-conjugated forms of ATG8. In Eremothecium gossypii (strain ATCC 10895 / CBS 109.51 / FGSC 9923 / NRRL Y-1056) (Yeast), this protein is Serine/threonine-protein kinase ATG1.